The primary structure comprises 421 residues: Imidazolonepropionase (421 aa).

Positions 81 and 83 each coordinate Fe(3+). Zn(2+) is bound by residues His-81 and His-83. The 4-imidazolone-5-propanoate site is built by Arg-90, Tyr-153, and His-186. Position 153 (Tyr-153) interacts with N-formimidoyl-L-glutamate. A Fe(3+)-binding site is contributed by His-251. Residue His-251 coordinates Zn(2+). Position 254 (Glu-254) interacts with 4-imidazolone-5-propanoate. Asp-326 serves as a coordination point for Fe(3+). Residue Asp-326 coordinates Zn(2+). The N-formimidoyl-L-glutamate site is built by Asn-328 and Gly-330. Ser-331 lines the 4-imidazolone-5-propanoate pocket.

This sequence belongs to the metallo-dependent hydrolases superfamily. HutI family. The cofactor is Zn(2+). It depends on Fe(3+) as a cofactor.

The protein localises to the cytoplasm. The catalysed reaction is 4-imidazolone-5-propanoate + H2O = N-formimidoyl-L-glutamate. Its pathway is amino-acid degradation; L-histidine degradation into L-glutamate; N-formimidoyl-L-glutamate from L-histidine: step 3/3. In terms of biological role, catalyzes the hydrolytic cleavage of the carbon-nitrogen bond in imidazolone-5-propanoate to yield N-formimidoyl-L-glutamate. It is the third step in the universal histidine degradation pathway. This chain is Imidazolonepropionase, found in Streptococcus pyogenes serotype M1.